Here is a 260-residue protein sequence, read N- to C-terminus: Tryptophan 2,3-dioxygenase (260 aa).

Substrate is bound by residues 34–38 (FIVIH) and R100. Residue H219 participates in heme binding. Position 233 (T233) interacts with substrate.

Belongs to the tryptophan 2,3-dioxygenase family. As to quaternary structure, homotetramer. The cofactor is heme.

It catalyses the reaction L-tryptophan + O2 = N-formyl-L-kynurenine. Its pathway is amino-acid degradation; L-tryptophan degradation via kynurenine pathway; L-kynurenine from L-tryptophan: step 1/2. Heme-dependent dioxygenase that catalyzes the oxidative cleavage of the L-tryptophan (L-Trp) pyrrole ring and converts L-tryptophan to N-formyl-L-kynurenine. Catalyzes the oxidative cleavage of the indole moiety. The polypeptide is Tryptophan 2,3-dioxygenase (Herpetosiphon aurantiacus (strain ATCC 23779 / DSM 785 / 114-95)).